The sequence spans 455 residues: Serine--tRNA ligase (455 aa).

Residue 252-254 (TAE) coordinates L-serine. ATP contacts are provided by residues 283-285 (RKE) and V299. An L-serine-binding site is contributed by E306. ATP is bound at residue 370-373 (EVVS). Residue T406 participates in L-serine binding.

The protein belongs to the class-II aminoacyl-tRNA synthetase family. Type-1 seryl-tRNA synthetase subfamily. In terms of assembly, homodimer. The tRNA molecule binds across the dimer.

Its subcellular location is the cytoplasm. The enzyme catalyses tRNA(Ser) + L-serine + ATP = L-seryl-tRNA(Ser) + AMP + diphosphate + H(+). The catalysed reaction is tRNA(Sec) + L-serine + ATP = L-seryl-tRNA(Sec) + AMP + diphosphate + H(+). Its pathway is aminoacyl-tRNA biosynthesis; selenocysteinyl-tRNA(Sec) biosynthesis; L-seryl-tRNA(Sec) from L-serine and tRNA(Sec): step 1/1. Functionally, catalyzes the attachment of serine to tRNA(Ser). Is also able to aminoacylate tRNA(Sec) with serine, to form the misacylated tRNA L-seryl-tRNA(Sec), which will be further converted into selenocysteinyl-tRNA(Sec). This Thermococcus kodakarensis (strain ATCC BAA-918 / JCM 12380 / KOD1) (Pyrococcus kodakaraensis (strain KOD1)) protein is Serine--tRNA ligase.